The primary structure comprises 248 residues: Ubiquinone biosynthesis O-methyltransferase (248 aa).

Arg41, Gly72, Asp93, and Met136 together coordinate S-adenosyl-L-methionine.

The protein belongs to the methyltransferase superfamily. UbiG/COQ3 family.

It carries out the reaction a 3-demethylubiquinol + S-adenosyl-L-methionine = a ubiquinol + S-adenosyl-L-homocysteine + H(+). It catalyses the reaction a 3-(all-trans-polyprenyl)benzene-1,2-diol + S-adenosyl-L-methionine = a 2-methoxy-6-(all-trans-polyprenyl)phenol + S-adenosyl-L-homocysteine + H(+). It participates in cofactor biosynthesis; ubiquinone biosynthesis. Functionally, O-methyltransferase that catalyzes the 2 O-methylation steps in the ubiquinone biosynthetic pathway. The protein is Ubiquinone biosynthesis O-methyltransferase of Bartonella bacilliformis (strain ATCC 35685 / KC583 / Herrer 020/F12,63).